We begin with the raw amino-acid sequence, 167 residues long: uncharacterized protein (167 aa).

This sequence belongs to the A.longa ORF167/ORF288 family.

The protein localises to the plastid. This is an uncharacterized protein from Euglena longa (Euglenophycean alga).